The following is a 579-amino-acid chain: Zinc finger protein 248 (579 aa).

One can recognise a KRAB domain in the interval 8–79 (VSFKDVCVDF…EKGFPSQCHP (72 aa)). A C2H2-type 1; degenerate zinc finger spans residues 240–264 (TVCKYNECGRTFIESLKLNISQRPH). Residue Lys-341 forms a Glycyl lysine isopeptide (Lys-Gly) (interchain with G-Cter in SUMO2) linkage. C2H2-type zinc fingers lie at residues 380–402 (FECG…QRTH), 408–430 (YECT…QRTH), 436–458 (YECK…QRTH), 464–486 (YECN…QRTH), 492–514 (FICN…QRTH), 520–543 (YKCN…RTHT), and 548–570 (YECN…QRIH).

It belongs to the krueppel C2H2-type zinc-finger protein family.

It is found in the nucleus. Functionally, may be involved in transcriptional regulation. This chain is Zinc finger protein 248 (ZNF248), found in Homo sapiens (Human).